Here is a 162-residue protein sequence, read N- to C-terminus: uncharacterized protein (162 aa).

4 helical membrane passes run 15-35 (VLAIFIVLLIISAYLGFAPAL), 43-63 (VCHFFVFFLLTLVFYWVFDLS), 70-90 (LTILVCGVFGGLGSEFVQSFL), and 97-117 (LFDIVANLLGCSLALLLNILY).

It localises to the membrane. This is an uncharacterized protein from Schizosaccharomyces pombe (strain 972 / ATCC 24843) (Fission yeast).